We begin with the raw amino-acid sequence, 365 residues long: MRVLAAMSGGVDSAVAASRAVAAGHEVVGVHLALSRDPQSVRESSRGCCSLEDSADARRVCDKLGIPFYVWDFSDRFKEDVIDDFIDSYAIGETPNPCLRCNEKIKFAALLERGIALGFDAVVTGHYARLTQPADGGDGYLRRGVDMNKDQSYVLGVLGAHEIAHCMFPVGDTVKPEIREEAAASGFSVAKKPDSYDICFIPDGNTQAFLGKHIGLRPGMIVDREGTTLREHAGVHEFTIGQRKGLDIKEPAADGRPRYVTDIDAATGTVTVGSREDLEVGVIHADRLKFLHPAMDGELDCEVQVRAHGGVVKCHARIDRTADTMRLDLAESLSGVARGQAAVLYLPDPEGDIVLGSGTICGTEA.

Residues 6–13 (AMSGGVDS) and Leu-32 contribute to the ATP site. Cys-101 (nucleophile) is an active-site residue. An intrachain disulfide couples Cys-101 to Cys-199. Gly-125 lines the ATP pocket. The interaction with tRNA stretch occupies residues 149-151 (KDQ). Residue Cys-199 is the Cysteine persulfide intermediate of the active site.

Belongs to the MnmA/TRMU family.

It is found in the cytoplasm. The catalysed reaction is S-sulfanyl-L-cysteinyl-[protein] + uridine(34) in tRNA + AH2 + ATP = 2-thiouridine(34) in tRNA + L-cysteinyl-[protein] + A + AMP + diphosphate + H(+). In terms of biological role, catalyzes the 2-thiolation of uridine at the wobble position (U34) of tRNA, leading to the formation of s(2)U34. The polypeptide is tRNA-specific 2-thiouridylase MnmA (Corynebacterium efficiens (strain DSM 44549 / YS-314 / AJ 12310 / JCM 11189 / NBRC 100395)).